Reading from the N-terminus, the 323-residue chain is Transcription factor MafB (323 aa).

A Glycyl lysine isopeptide (Lys-Gly) (interchain with G-Cter in SUMO) cross-link involves residue lysine 32. Positions 34–43 (EPLGRAERPG) are enriched in basic and acidic residues. 2 disordered regions span residues 34 to 78 (EPLG…PTEQ) and 116 to 210 (PVPQ…VEDR). A compositionally biased stretch (low complexity) spans 54–76 (SLSSTPLSTPCSSVPSSPSFSPT). Composition is skewed to basic residues over residues 129–143 (GAHH…HPHH) and 159–168 (AHPHHHHHHQ). Over residues 192–201 (PHATASATAA) the composition is skewed to low complexity. Residues 238–263 (RLKQKRRTLKNRGYAQSCRYKRVQQK) are basic motif. Positions 238-301 (RLKQKRRTLK…DAHKVKCEKL (64 aa)) constitute a bZIP domain. The segment at 266–287 (LENEKTQLIQQVEQLKQEVSRL) is leucine-zipper. Lysine 297 is covalently cross-linked (Glycyl lysine isopeptide (Lys-Gly) (interchain with G-Cter in SUMO)).

Belongs to the bZIP family. Maf subfamily. As to quaternary structure, homodimer or heterodimer with other bHLH-Zip transcription factors. Binds DNA as a homodimer or a heterodimer. Forms homodimers and heterodimers with FOS, FOSB and FOSL2, but not with JUN proteins (JUN, JUNB and JUND). Interacts with PAX6; the interaction is direct. Interacts with ETS1 and LRP1. Interacts with the intracellular cytoplasmic domain of LRP1 (LRPICD); the interaction results in a moderate reduction of MAFB transcriptional potential. Sumoylated. Sumoylation on Lys-32 and Lys-297 stimulates its transcriptional repression activity and promotes macrophage differentiation from myeloid progenitors.

The protein resides in the nucleus. Its function is as follows. Acts as a transcriptional activator or repressor. Plays a pivotal role in regulating lineage-specific hematopoiesis by repressing ETS1-mediated transcription of erythroid-specific genes in myeloid cells. Required for monocytic, macrophage, osteoclast, podocyte and islet beta cell differentiation. Involved in renal tubule survival and F4/80 maturation. Activates the insulin and glucagon promoters. Together with PAX6, transactivates weakly the glucagon gene promoter through the G1 element. SUMO modification controls its transcriptional activity and ability to specify macrophage fate. Binds element G1 on the glucagon promoter. Involved either as an oncogene or as a tumor suppressor, depending on the cell context. Required for the transcriptional activation of HOXB3 in the rhombomere r5 in the hindbrain. The protein is Transcription factor MafB (MAFB) of Macaca fascicularis (Crab-eating macaque).